The following is a 457-amino-acid chain: Multidrug resistance protein MdtK (457 aa).

12 consecutive transmembrane segments (helical) span residues 11-31, 46-66, 93-113, 127-147, 160-180, 188-208, 243-263, 283-301, 316-336, 357-377, 387-407, and 418-438; these read LLAL…MGVV, AVAV…GLLL, WLAL…DHVI, AVGF…FQVL, GMVI…IFIY, LGGV…FLMM, LPVA…ALLV, LMFM…RVGF, YTSM…TIVF, LMLL…GSGV, IFFI…YLLG, and PAGF…LMVL.

Belongs to the multi antimicrobial extrusion (MATE) (TC 2.A.66.1) family. MdtK subfamily.

It localises to the cell inner membrane. In terms of biological role, multidrug efflux pump that functions probably as a Na(+)/drug antiporter. The polypeptide is Multidrug resistance protein MdtK (Yersinia pseudotuberculosis serotype IB (strain PB1/+)).